The chain runs to 230 residues: Phosphoribosylaminoimidazole-succinocarboxamide synthase (230 aa).

Belongs to the SAICAR synthetase family.

The enzyme catalyses 5-amino-1-(5-phospho-D-ribosyl)imidazole-4-carboxylate + L-aspartate + ATP = (2S)-2-[5-amino-1-(5-phospho-beta-D-ribosyl)imidazole-4-carboxamido]succinate + ADP + phosphate + 2 H(+). It participates in purine metabolism; IMP biosynthesis via de novo pathway; 5-amino-1-(5-phospho-D-ribosyl)imidazole-4-carboxamide from 5-amino-1-(5-phospho-D-ribosyl)imidazole-4-carboxylate: step 1/2. The chain is Phosphoribosylaminoimidazole-succinocarboxamide synthase from Thermotoga sp. (strain RQ2).